The primary structure comprises 746 residues: Centromere protein I (746 aa).

A disordered region spans residues 1–24 (MATQRVTRNSQQQNRISQGSNSRQ).

Belongs to the CENP-I/CTF3 family. In terms of assembly, component of the CENPA-CAD complex, composed of CENPI, CENPK, CENPL, CENPO, CENPP, CENPQ, CENPR and CENPS. The CENPA-CAD complex interacts with the CENPA-NAC complex, at least composed of CENPA, CENPC, CENPH, CENPM, CENPN, CENPT and CENPU. Interacts with SENP6. In terms of processing, sumoylated. Sumoylated form can be polyubiquitinated by RNF4, leading to its degradation. Desumoylation by SENP6 prevents its degradation.

The protein resides in the nucleus. The protein localises to the chromosome. It is found in the centromere. Its function is as follows. Component of the CENPA-CAD (nucleosome distal) complex, a complex recruited to centromeres which is involved in assembly of kinetochore proteins, mitotic progression and chromosome segregation. May be involved in incorporation of newly synthesized CENPA into centromeres via its interaction with the CENPA-NAC complex. Required for the localization of CENPF, MAD1L1 and MAD2 (MAD2L1 or MAD2L2) to kinetochores. Involved in the response of gonadal tissues to follicle-stimulating hormone. This is Centromere protein I (Cenpi) from Mus musculus (Mouse).